Consider the following 449-residue polypeptide: uncharacterized protein (449 aa).

The protein resides in the mitochondrion. This is an uncharacterized protein from Podospora anserina (strain S / ATCC MYA-4624 / DSM 980 / FGSC 10383) (Pleurage anserina).